We begin with the raw amino-acid sequence, 161 residues long: Tick receptor for ospA (161 aa).

As to quaternary structure, interacts with ospA protein from B.burgdorferi. In terms of processing, glycosylated. In terms of tissue distribution, specifically expressed in gut. Localizes predominantly in the intercellular spaces and luminal surface of the gut. In the gut, it localizes along tight junctions. Not expressed in salivary gland or hemolymph.

It localises to the cell membrane. In terms of biological role, serves as a receptor for ospA protein of B.burgdorferi, the Lyme disease agent. Required for spirochetal colonization. Essential for pathogen adherence to the vector. This Ixodes scapularis (Black-legged tick) protein is Tick receptor for ospA (TROSPA).